Consider the following 253-residue polypeptide: Mediator of RNA polymerase II transcription subunit 10 (253 aa).

Disordered stretches follow at residues 32 to 63, 88 to 109, and 206 to 253; these read YDTN…HASS, LPSS…TELE, and VEAT…QSGQ. Positions 34–47 are enriched in low complexity; the sequence is TNPSSSNNNTPTSS. Gly residues predominate over residues 50–60; the sequence is SGGGGGGGGGH. The span at 88–104 shows a compositional bias: low complexity; sequence LPSSPSSGPSNNQPQQG. The segment covering 231–253 has biased composition (gly residues); sequence SAGGEGQQGQGQGQQGQGQQSGQ.

It belongs to the Mediator complex subunit 10 family. In terms of assembly, component of the Mediator complex.

The protein localises to the nucleus. Its function is as follows. Component of the Mediator complex, a coactivator involved in the regulated transcription of nearly all RNA polymerase II-dependent genes. Mediator functions as a bridge to convey information from gene-specific regulatory proteins to the basal RNA polymerase II transcription machinery. Mediator is recruited to promoters by direct interactions with regulatory proteins and serves as a scaffold for the assembly of a functional preinitiation complex with RNA polymerase II and the general transcription factors. This Neurospora crassa (strain ATCC 24698 / 74-OR23-1A / CBS 708.71 / DSM 1257 / FGSC 987) protein is Mediator of RNA polymerase II transcription subunit 10 (nut2).